Here is a 37-residue protein sequence, read N- to C-terminus: Large ribosomal subunit protein bL36B (37 aa).

It belongs to the bacterial ribosomal protein bL36 family.

The chain is Large ribosomal subunit protein bL36B from Kineococcus radiotolerans (strain ATCC BAA-149 / DSM 14245 / SRS30216).